We begin with the raw amino-acid sequence, 444 residues long: Presenilin sel-12 (444 aa).

Residues M1–Y45 are Cytoplasmic-facing. A helical membrane pass occupies residues G46–F66. Over T67 to S101 the chain is Lumenal. Residues L102–F122 form a helical membrane-spanning segment. Over Y123–L130 the chain is Cytoplasmic. Residues I131–V151 form a helical membrane-spanning segment. Residues Q152–S163 are Lumenal-facing. Residues A164–W184 form a helical membrane-spanning segment. At K185–R189 the chain is on the cytoplasmic side. A helical transmembrane segment spans residues L190–L210. Topologically, residues P211–E212 are lumenal. A helical membrane pass occupies residues W213–P233. D226 is a catalytic residue. Topologically, residues K234 to K359 are cytoplasmic. The segment at T275 to R331 is disordered. Composition is skewed to polar residues over residues S282–E300 and Q315–G329. A helical transmembrane segment spans residues L360–D380. D364 is an active-site residue. The Lumenal portion of the chain corresponds to W381–T384. The chain crosses the membrane as a helical span at residues I385–F405. At K406 to P413 the chain is on the cytoplasmic side. The PAL signature appears at P410–L412. The segment at residues I414–V434 is an intramembrane region (helical). Over T435–Y444 the chain is Cytoplasmic.

Belongs to the peptidase A22A family. As to quaternary structure, homodimer. Component of the gamma-secretase complex, a complex probably composed of the presenilin homodimer (sel-12, hop-1 or spe-4), nicastrin (aph-2), aph-1 and pen-2. Interacts with sel-10. Expressed in most neurons.

Its subcellular location is the endoplasmic reticulum membrane. The protein resides in the golgi apparatus membrane. Functionally, probable catalytic subunit of the gamma-secretase complex, an endoprotease complex that catalyzes the intramembrane cleavage of integral membrane proteins such as Notch receptors (lin-12 or glp-1). Provides the major presenilin function compared to hop-1 and spe-4. Required cell-autonomously for correct neurite connectivity of the AIY cholinergic interneurons and their correct functioning in thermotaxis. Required for mesodermal patterning of muscle function. Promotes basement membrane gap formation during tissue remodeling. In Caenorhabditis elegans, this protein is Presenilin sel-12.